The following is a 554-amino-acid chain: Undecaprenyl phosphate-alpha-4-amino-4-deoxy-L-arabinose arabinosyl transferase (554 aa).

The next 11 helical transmembrane spans lie at 4 to 24, 87 to 107, 115 to 135, 178 to 198, 206 to 226, 262 to 282, 293 to 313, 315 to 335, 352 to 372, 384 to 404, and 410 to 430; these read LKGSGAALLALFFALVYLLPI, FGSIFSTALSAVFVYWLATLL, FLAALIYLSMLLVFSIGSYAV, FMTKGFLALAVPVISVLPIVI, LIIFGPIAIVGAVILSLPWAL, YLPILCLGVLPWLGLLPAALL, ELFFLLSWVLMPLIFFSVAKG, LPTYILPCMAPLSLLMAAYAT, INLIFGFICALAILVIGMGWV, QKVILATIAFAGWGIVGFATM, and HWHWAAACPLLFILLVGYLIP.

This sequence belongs to the glycosyltransferase 83 family.

Its subcellular location is the cell inner membrane. The enzyme catalyses 4-amino-4-deoxy-alpha-L-arabinopyranosyl di-trans,octa-cis-undecaprenyl phosphate + lipid IVA = lipid IIA + di-trans,octa-cis-undecaprenyl phosphate.. It functions in the pathway lipopolysaccharide metabolism; 4-amino-4-deoxy-beta-L-arabinose-lipid A biosynthesis. Catalyzes the transfer of the L-Ara4N moiety of the glycolipid undecaprenyl phosphate-alpha-L-Ara4N to lipid A. The modified arabinose is attached to lipid A and is required for resistance to polymyxin and cationic antimicrobial peptides. This Yersinia enterocolitica serotype O:8 / biotype 1B (strain NCTC 13174 / 8081) protein is Undecaprenyl phosphate-alpha-4-amino-4-deoxy-L-arabinose arabinosyl transferase.